The chain runs to 467 residues: Nuclear distribution protein nudF (467 aa).

In terms of domain architecture, LisH spans 9–41 (QAEELHKSIIAYLASVNLTESSAALRAELGDSV). Positions 60 to 87 (TSVVRLQKKIMDLESRCAALQSELDSAT) form a coiled coil. WD repeat units follow at residues 113 to 154 (GHRN…RTVK), 156 to 196 (HTKA…KNIR), 200 to 247 (GHDH…CVKT), 250 to 289 (GHVD…TKST), 292 to 352 (GHEH…IKTL), 354 to 393 (GHDN…KCVR), 398 to 428 (AHGH…NGTP), and 429 to 466 (AATS…RIFA). The interval 417-439 (GANGEAETNGTPAATSTTNGVRP) is disordered. Residues 422 to 436 (AETNGTPAATSTTNG) are compositionally biased toward polar residues.

It belongs to the WD repeat LIS1/nudF family. Self-associates. Interacts with nudE and dynein.

The protein localises to the cytoplasm. It localises to the cytoskeleton. It is found in the spindle pole. Functionally, positively regulates the activity of the minus-end directed microtubule motor protein dynein. May enhance dynein-mediated microtubule sliding by targeting dynein to the microtubule plus end. Required for nuclear migration during vegetative growth as well as development. Required for retrograde early endosome (EE) transport from the hyphal tip. Required for localization of dynein to the mitotic spindle poles. Recruits additional proteins to the dynein complex at SPBs. The sequence is that of Nuclear distribution protein nudF from Aspergillus fumigatus (strain CBS 144.89 / FGSC A1163 / CEA10) (Neosartorya fumigata).